We begin with the raw amino-acid sequence, 135 residues long: Class I hydrophobin 2 (135 aa).

A signal peptide spans 1–20 (MFARLTSTLFALAAVSAVFA). Intrachain disulfides connect Cys29/Cys114, Cys36/Cys107, Cys37/Cys73, and Cys115/Cys128. N-linked (GlcNAc...) asparagine glycans are attached at residues Asn117 and Asn132.

This sequence belongs to the fungal hydrophobin family. Self-assembles to form functional amyloid fibrils called rodlets. Self-assembly into fibrillar rodlets occurs spontaneously at hydrophobic:hydrophilic interfaces and the rodlets further associate laterally to form amphipathic monolayers.

The protein localises to the secreted. The protein resides in the cell wall. In terms of biological role, aerial growth, conidiation, and dispersal of filamentous fungi in the environment rely upon a capability of their secreting small amphipathic proteins called hydrophobins (HPBs) with low sequence identity. Class I can self-assemble into an outermost layer of rodlet bundles on aerial cell surfaces, conferring cellular hydrophobicity that supports fungal growth, development and dispersal; whereas Class II form highly ordered films at water-air interfaces through intermolecular interactions but contribute nothing to the rodlet structure. The chain is Class I hydrophobin 2 from Coprinopsis cinerea (strain Okayama-7 / 130 / ATCC MYA-4618 / FGSC 9003) (Inky cap fungus).